The following is a 230-amino-acid chain: Large ribosomal subunit protein uL1 (230 aa).

It belongs to the universal ribosomal protein uL1 family. Part of the 50S ribosomal subunit.

Binds directly to 23S rRNA. The L1 stalk is quite mobile in the ribosome, and is involved in E site tRNA release. In terms of biological role, protein L1 is also a translational repressor protein, it controls the translation of the L11 operon by binding to its mRNA. The chain is Large ribosomal subunit protein uL1 from Leuconostoc mesenteroides subsp. mesenteroides (strain ATCC 8293 / DSM 20343 / BCRC 11652 / CCM 1803 / JCM 6124 / NCDO 523 / NBRC 100496 / NCIMB 8023 / NCTC 12954 / NRRL B-1118 / 37Y).